We begin with the raw amino-acid sequence, 287 residues long: Serine/arginine-rich SC35-like splicing factor SCL33 (287 aa).

Residues Met1–Leu34 form a disordered region. Ser9 and Ser20 each carry phosphoserine. Residues Thr36 to Glu114 enclose the RRM domain. Positions Arg116–Phe132 are enriched in basic and acidic residues. Positions Arg116–Gln287 are disordered. 5 positions are modified to phosphoserine: Ser165, Ser175, Ser177, Ser188, and Ser190. The span at Ser177–Arg187 shows a compositional bias: basic and acidic residues. The span at Ser220–Arg237 shows a compositional bias: basic residues. 5 positions are modified to phosphoserine: Ser238, Ser248, Ser271, Ser284, and Ser286. Over residues Ser244–Arg260 the composition is skewed to basic residues. A compositionally biased stretch (basic and acidic residues) spans Gln278–Gln287.

It belongs to the splicing factor SR family. SCL subfamily. Component of the spliceosome. Homodimer. Interacts with AFC2, CYP59, RS2Z33, RNU1 and SR45. The interaction with AFC2 depends on phosphorylation status. Phosphorylated by AFC2. In terms of tissue distribution, ubiquitous. Mostly expressed in roots, fruits and flowers, and, to a lower extent, in leaves.

The protein localises to the nucleus speckle. It localises to the nucleus. Its subcellular location is the nucleoplasm. It is found in the cytoplasm. Functionally, involved in intron recognition and spliceosome assembly. Binds to multiple 5'-GAAG-3' repeats found in its third intron, suggesting autoregulation of alternative splicing. May be necessary for accurate splicing of the 3' region of introns. The sequence is that of Serine/arginine-rich SC35-like splicing factor SCL33 (SCL33) from Arabidopsis thaliana (Mouse-ear cress).